Here is a 609-residue protein sequence, read N- to C-terminus: Elongation factor 4 (609 aa).

The 183-residue stretch at 5–187 (SKIRNFSIIA…AIVAKIPPPE (183 aa)) folds into the tr-type G domain. GTP-binding positions include 17-22 (DHGKST) and 134-137 (NKID).

The protein belongs to the TRAFAC class translation factor GTPase superfamily. Classic translation factor GTPase family. LepA subfamily.

The protein localises to the cell inner membrane. It catalyses the reaction GTP + H2O = GDP + phosphate + H(+). Functionally, required for accurate and efficient protein synthesis under certain stress conditions. May act as a fidelity factor of the translation reaction, by catalyzing a one-codon backward translocation of tRNAs on improperly translocated ribosomes. Back-translocation proceeds from a post-translocation (POST) complex to a pre-translocation (PRE) complex, thus giving elongation factor G a second chance to translocate the tRNAs correctly. Binds to ribosomes in a GTP-dependent manner. The sequence is that of Elongation factor 4 from Erythrobacter litoralis (strain HTCC2594).